We begin with the raw amino-acid sequence, 297 residues long: HTH-type transcriptional regulator ArgP (297 aa).

Residues 4–60 form the HTH lysR-type domain; it reads PDYRTLQALDAVIRERGFERAAQKLCITQSAVSQRIKQLENLFGQPLLVRTIPPRPT. Positions 21–40 form a DNA-binding region, H-T-H motif; that stretch reads FERAAQKLCITQSAVSQRIK.

The protein belongs to the LysR transcriptional regulatory family. In terms of assembly, homodimer.

In terms of biological role, controls the transcription of genes involved in arginine and lysine metabolism. In Pectobacterium atrosepticum (strain SCRI 1043 / ATCC BAA-672) (Erwinia carotovora subsp. atroseptica), this protein is HTH-type transcriptional regulator ArgP.